A 142-amino-acid chain; its full sequence is uncharacterized protein (142 aa).

The protein resides in the mitochondrion. This is an uncharacterized protein from Mus musculus (Mouse).